The sequence spans 359 residues: Ornithine cyclodeaminase (359 aa).

Residues Arg-53 and Lys-77 each coordinate L-ornithine. Residues Thr-92, Arg-120, 147-148, Asp-169, Thr-209, 232-235, Lys-239, and Ser-300 contribute to the NAD(+) site; these read AQ and VGGD. L-ornithine is bound at residue Arg-120. Asp-235 is an L-ornithine binding site. The active-site Proton donor/acceptor is Asp-235. Val-301 provides a ligand contact to L-ornithine.

This sequence belongs to the ornithine cyclodeaminase/mu-crystallin family. The cofactor is NAD(+).

The catalysed reaction is L-ornithine = L-proline + NH4(+). It participates in amino-acid biosynthesis; L-proline biosynthesis; L-proline from L-ornithine: step 1/1. Its function is as follows. Catalyzes the conversion of L-ornithine into L-proline with release of ammonia. This is Ornithine cyclodeaminase from Brucella abortus biovar 1 (strain 9-941).